A 750-amino-acid chain; its full sequence is Amyloid-beta A4 precursor protein-binding family A member 2 (750 aa).

Disordered stretches follow at residues Met-1–Glu-94 and Asp-143–Thr-346. A Phosphoserine modification is found at Ser-11. The span at Gly-70–Thr-80 shows a compositional bias: polar residues. The span at Ser-81–Glu-94 shows a compositional bias: acidic residues. The STXBP1-binding stretch occupies residues His-185–Thr-271. The residue at position 209 (Ser-209) is a Phosphoserine. Acidic residues predominate over residues Asp-219–Asp-228. Polar residues-rich tracts occupy residues Leu-238 to Glu-248 and Ser-332 to Pro-344. The PID domain maps to Leu-367–Asp-556. PDZ domains are found at residues Glu-569–Ser-654 and Thr-660–Ala-736.

As to quaternary structure, part of a multimeric complex containing STXBP1 and syntaxin-1. Binds to the cytoplasmic domain of amyloid-beta protein, and to the nuclear factor NF-kappa-B/p65 via its PDZ domain. Interacts with the N-terminal domain of NECAB3. Specifically expressed in neurons, predominantly of the cerebellum, hippocampus, and spinal cord. Lesser extent in neurons of the cerebral cortex and anterior thalmic nuclei.

Putative function in synaptic vesicle exocytosis by binding to STXBP1, an essential component of the synaptic vesicle exocytotic machinery. May modulate processing of the amyloid-beta precursor protein (APP) and hence formation of APP-beta. In Mus musculus (Mouse), this protein is Amyloid-beta A4 precursor protein-binding family A member 2 (Apba2).